A 558-amino-acid polypeptide reads, in one-letter code: Dihydroxy-acid dehydratase (558 aa).

Mg(2+) is bound at residue aspartate 78. Cysteine 119 lines the [2Fe-2S] cluster pocket. Mg(2+)-binding residues include aspartate 120 and lysine 121. An N6-carboxylysine modification is found at lysine 121. A [2Fe-2S] cluster-binding site is contributed by cysteine 192. Glutamate 446 contributes to the Mg(2+) binding site. The Proton acceptor role is filled by serine 472.

It belongs to the IlvD/Edd family. In terms of assembly, homodimer. [2Fe-2S] cluster is required as a cofactor. Mg(2+) serves as cofactor.

It carries out the reaction (2R)-2,3-dihydroxy-3-methylbutanoate = 3-methyl-2-oxobutanoate + H2O. The enzyme catalyses (2R,3R)-2,3-dihydroxy-3-methylpentanoate = (S)-3-methyl-2-oxopentanoate + H2O. It participates in amino-acid biosynthesis; L-isoleucine biosynthesis; L-isoleucine from 2-oxobutanoate: step 3/4. Its pathway is amino-acid biosynthesis; L-valine biosynthesis; L-valine from pyruvate: step 3/4. In terms of biological role, functions in the biosynthesis of branched-chain amino acids. Catalyzes the dehydration of (2R,3R)-2,3-dihydroxy-3-methylpentanoate (2,3-dihydroxy-3-methylvalerate) into 2-oxo-3-methylpentanoate (2-oxo-3-methylvalerate) and of (2R)-2,3-dihydroxy-3-methylbutanoate (2,3-dihydroxyisovalerate) into 2-oxo-3-methylbutanoate (2-oxoisovalerate), the penultimate precursor to L-isoleucine and L-valine, respectively. This Campylobacter jejuni subsp. doylei (strain ATCC BAA-1458 / RM4099 / 269.97) protein is Dihydroxy-acid dehydratase.